Reading from the N-terminus, the 364-residue chain is tRNA-specific 2-thiouridylase MnmA 1 (364 aa).

ATP is bound by residues 11 to 18 and F37; that span reads GMSGGTDS. Catalysis depends on C96, which acts as the Nucleophile. C96 and C193 are joined by a disulfide. An ATP-binding site is contributed by G120. The segment at 142–144 is interaction with tRNA; that stretch reads KDQ. C193 acts as the Cysteine persulfide intermediate in catalysis. The interaction with tRNA stretch occupies residues 309 to 310; sequence RY.

Belongs to the MnmA/TRMU family.

The protein resides in the cytoplasm. The catalysed reaction is S-sulfanyl-L-cysteinyl-[protein] + uridine(34) in tRNA + AH2 + ATP = 2-thiouridine(34) in tRNA + L-cysteinyl-[protein] + A + AMP + diphosphate + H(+). In terms of biological role, catalyzes the 2-thiolation of uridine at the wobble position (U34) of tRNA, leading to the formation of s(2)U34. The polypeptide is tRNA-specific 2-thiouridylase MnmA 1 (Bacteroides fragilis (strain YCH46)).